Reading from the N-terminus, the 1154-residue chain is DNA-directed RNA polymerase subunit beta' (1154 aa).

The Zn(2+) site is built by Cys-60, Cys-62, Cys-75, and Cys-78. Mg(2+) contacts are provided by Asp-449, Asp-451, and Asp-453. Residues Cys-774, Cys-848, Cys-855, and Cys-858 each contribute to the Zn(2+) site.

Belongs to the RNA polymerase beta' chain family. The RNAP catalytic core consists of 2 alpha, 1 beta, 1 beta' and 1 omega subunit. When a sigma factor is associated with the core the holoenzyme is formed, which can initiate transcription. Requires Mg(2+) as cofactor. Zn(2+) serves as cofactor.

The catalysed reaction is RNA(n) + a ribonucleoside 5'-triphosphate = RNA(n+1) + diphosphate. DNA-dependent RNA polymerase catalyzes the transcription of DNA into RNA using the four ribonucleoside triphosphates as substrates. This is DNA-directed RNA polymerase subunit beta' from Desulforudis audaxviator (strain MP104C).